We begin with the raw amino-acid sequence, 381 residues long: Cytochrome b (381 aa).

Helical transmembrane passes span 38 to 58 (FGSL…FLAM), 82 to 103 (WLLR…YFHI), 118 to 138 (WMTG…GYVL), and 183 to 203 (FFTF…IHLL). Residues His-88 and His-102 each coordinate heme b. 2 residues coordinate heme b: His-187 and His-201. His-206 serves as a coordination point for a ubiquinone. A run of 4 helical transmembrane segments spans residues 231 to 251 (IKDT…SLTS), 293 to 313 (LGGV…PFTF), 325 to 345 (VAQP…WIGA), and 352 to 372 (YNFL…FTPI).

It belongs to the cytochrome b family. In terms of assembly, the main subunits of complex b-c1 are: cytochrome b, cytochrome c1 and the Rieske protein. Requires heme b as cofactor.

The protein localises to the mitochondrion inner membrane. Component of the ubiquinol-cytochrome c reductase complex (complex III or cytochrome b-c1 complex) that is part of the mitochondrial respiratory chain. The b-c1 complex mediates electron transfer from ubiquinol to cytochrome c. Contributes to the generation of a proton gradient across the mitochondrial membrane that is then used for ATP synthesis. The chain is Cytochrome b (MT-CYB) from Artemia franciscana (Brine shrimp).